Consider the following 272-residue polypeptide: Tryptophan synthase alpha chain (272 aa).

Residues Glu-53 and Asp-64 each act as proton acceptor in the active site.

The protein belongs to the TrpA family. Tetramer of two alpha and two beta chains.

The catalysed reaction is (1S,2R)-1-C-(indol-3-yl)glycerol 3-phosphate + L-serine = D-glyceraldehyde 3-phosphate + L-tryptophan + H2O. It functions in the pathway amino-acid biosynthesis; L-tryptophan biosynthesis; L-tryptophan from chorismate: step 5/5. In terms of biological role, the alpha subunit is responsible for the aldol cleavage of indoleglycerol phosphate to indole and glyceraldehyde 3-phosphate. The polypeptide is Tryptophan synthase alpha chain (Xanthomonas campestris pv. campestris (strain B100)).